The primary structure comprises 361 residues: Probable U3 small nucleolar RNA-associated protein 11 (361 aa).

Disordered stretches follow at residues 1–52 (MTKG…KKRK), 200–235 (LMSG…TPET), 262–295 (KRES…TRLL), and 311–361 (RHVR…RRAR). Basic residues predominate over residues 17–33 (HLKRKTHLERSQPKSRQ). 2 stretches are compositionally biased toward basic and acidic residues: residues 37–46 (QLEKHKDHVL) and 217–228 (RREVQEKMRRSG). The span at 278–287 (DDGEQEEAAA) shows a compositional bias: acidic residues. Residues 342-352 (RQMEQRRESRF) show a composition bias toward basic and acidic residues.

This sequence belongs to the UTP11 family. As to quaternary structure, component of the ribosomal small subunit (SSU) processome.

It localises to the nucleus. The protein localises to the nucleolus. Involved in nucleolar processing of pre-18S ribosomal RNA. The chain is Probable U3 small nucleolar RNA-associated protein 11 from Leishmania major.